Consider the following 117-residue polypeptide: Ig heavy chain V region G4 (117 aa).

The N-terminal stretch at 1 to 19 (MTHWLCFTLALVAVRGVLS) is a signal peptide. A framework-1 region spans residues 20–49 (EIQLVESGGAIRKPGDSLRLSCKASGFTFS). C41 and C115 are joined by a disulfide. Residues 50–54 (DTWMA) form a complementarity-determining-1 region. Positions 55–68 (WARQPPGKGLQWVG) are framework-2. Residues 69–85 (EINGNSETIRYAPEVKG) are complementarity-determining-2. Residues 86 to 117 (RLTISRDNTQNLLFLQISSLKPEDTATYYCAR) are framework-3.

The protein is Ig heavy chain V region G4 (G4) of Caiman crocodilus (Spectacled caiman).